A 297-amino-acid polypeptide reads, in one-letter code: Formylmethanofuran--tetrahydromethanopterin formyltransferase (297 aa).

It belongs to the FTR family. As to quaternary structure, homotetramer.

Its subcellular location is the cytoplasm. It catalyses the reaction N-formylmethanofuran + 5,6,7,8-tetrahydromethanopterin + H(+) = N(5)-formyl-5,6,7,8-tetrahydromethanopterin + methanofuran. It participates in one-carbon metabolism; methanogenesis from CO(2); 5,10-methenyl-5,6,7,8-tetrahydromethanopterin from CO(2): step 2/3. Functionally, catalyzes the reversible transfer of a formyl group from formylmethanofuran (formyl-MFR) to tetrahydromethanopterin (H(4)MPT) to produce 5-formyl tetrahydromethanopterin (5-formyl-H(4)MPT) and methanofuran (MFR). This chain is Formylmethanofuran--tetrahydromethanopterin formyltransferase, found in Methanococcoides burtonii (strain DSM 6242 / NBRC 107633 / OCM 468 / ACE-M).